A 120-amino-acid polypeptide reads, in one-letter code: UPF0102 protein PST_1070 (120 aa).

Belongs to the UPF0102 family.

The sequence is that of UPF0102 protein PST_1070 from Stutzerimonas stutzeri (strain A1501) (Pseudomonas stutzeri).